Here is a 281-residue protein sequence, read N- to C-terminus: MKYVGAHVSASGGVENAVKNAVDIGANGFALFTKNQRQWVAKPLSEKSINKFKELMEEHGFIADGVLPHDSYLINLGHPEEDKREKSYNAFVDEIRRVEQLGLKYLNFHPGSHLKKISEEECLDLISENINRAIKDTEYATLVLETTAGQGSNLGYKFEHLAYIIDNIEDKSRIGVCIDTAHIFAAGYDIRTKEAYEKTMQEFDEIVGFKYLKGMHINDSKAKFASRVDRHHSLGKGEIGIDAFKFIMQDSRIDNIPLVLETIEPEIWADEIKLLKSFENV.

The Zn(2+) site is built by His-69, His-109, Glu-145, Asp-179, His-182, His-216, Asp-229, His-231, and Glu-261.

It belongs to the AP endonuclease 2 family. Requires Zn(2+) as cofactor.

The catalysed reaction is Endonucleolytic cleavage to 5'-phosphooligonucleotide end-products.. Endonuclease IV plays a role in DNA repair. It cleaves phosphodiester bonds at apurinic or apyrimidinic (AP) sites, generating a 3'-hydroxyl group and a 5'-terminal sugar phosphate. The polypeptide is Probable endonuclease 4 (Nautilia profundicola (strain ATCC BAA-1463 / DSM 18972 / AmH)).